Reading from the N-terminus, the 308-residue chain is Aspartate carbamoyltransferase catalytic subunit (308 aa).

Positions 59 and 60 each coordinate carbamoyl phosphate. Lys87 serves as a coordination point for L-aspartate. Residues Arg109, His139, and Gln142 each coordinate carbamoyl phosphate. L-aspartate is bound by residues Arg172 and Arg224. 2 residues coordinate carbamoyl phosphate: Ala265 and Pro266.

This sequence belongs to the aspartate/ornithine carbamoyltransferase superfamily. ATCase family. Heterododecamer (2C3:3R2) of six catalytic PyrB chains organized as two trimers (C3), and six regulatory PyrI chains organized as three dimers (R2).

It carries out the reaction carbamoyl phosphate + L-aspartate = N-carbamoyl-L-aspartate + phosphate + H(+). The protein operates within pyrimidine metabolism; UMP biosynthesis via de novo pathway; (S)-dihydroorotate from bicarbonate: step 2/3. In terms of biological role, catalyzes the condensation of carbamoyl phosphate and aspartate to form carbamoyl aspartate and inorganic phosphate, the committed step in the de novo pyrimidine nucleotide biosynthesis pathway. The sequence is that of Aspartate carbamoyltransferase catalytic subunit from Enterococcus faecalis (strain ATCC 700802 / V583).